The primary structure comprises 361 residues: tRNA 2-selenouridine synthase (361 aa).

The Rhodanese domain maps to 12-135 (VLKNIPLIDV…FRRYLIDHLE (124 aa)). C95 acts as the S-selanylcysteine intermediate in catalysis.

It belongs to the SelU family. In terms of assembly, monomer.

The catalysed reaction is 5-methylaminomethyl-2-thiouridine(34) in tRNA + selenophosphate + (2E)-geranyl diphosphate + H2O + H(+) = 5-methylaminomethyl-2-selenouridine(34) in tRNA + (2E)-thiogeraniol + phosphate + diphosphate. It catalyses the reaction 5-methylaminomethyl-2-thiouridine(34) in tRNA + (2E)-geranyl diphosphate = 5-methylaminomethyl-S-(2E)-geranyl-thiouridine(34) in tRNA + diphosphate. It carries out the reaction 5-methylaminomethyl-S-(2E)-geranyl-thiouridine(34) in tRNA + selenophosphate + H(+) = 5-methylaminomethyl-2-(Se-phospho)selenouridine(34) in tRNA + (2E)-thiogeraniol. The enzyme catalyses 5-methylaminomethyl-2-(Se-phospho)selenouridine(34) in tRNA + H2O = 5-methylaminomethyl-2-selenouridine(34) in tRNA + phosphate. In terms of biological role, involved in the post-transcriptional modification of the uridine at the wobble position (U34) of tRNA(Lys), tRNA(Glu) and tRNA(Gln). Catalyzes the conversion of 2-thiouridine (S2U-RNA) to 2-selenouridine (Se2U-RNA). Acts in a two-step process involving geranylation of 2-thiouridine (S2U) to S-geranyl-2-thiouridine (geS2U) and subsequent selenation of the latter derivative to 2-selenouridine (Se2U) in the tRNA chain. The sequence is that of tRNA 2-selenouridine synthase from Hydrogenovibrio crunogenus (strain DSM 25203 / XCL-2) (Thiomicrospira crunogena).